The sequence spans 542 residues: uncharacterized protein (542 aa).

A glycan (N-linked (GlcNAc...) asparagine) is linked at N6. 8 consecutive transmembrane segments (helical) span residues 61-81 (FSTW…ATVV), 95-115 (SAVW…LSVA), 139-159 (SMPV…AAGV), 188-208 (HIVG…SLST), 217-237 (FYAT…LAKC), 255-275 (GWHP…WCMT), 298-318 (IALA…VLAF), and 348-368 (GSMA…ITAM). N-linked (GlcNAc...) asparagine glycosylation occurs at N394. A run of 4 helical transmembrane segments spans residues 402–422 (IAVW…LGSI), 424–444 (AIEA…VIPI), 469–489 (FVNA…LMPT), and 500–520 (YAVV…WSGA).

It belongs to the amino acid-polyamine-organocation (APC) superfamily.

Its subcellular location is the golgi apparatus. The protein resides in the membrane. This is an uncharacterized protein from Schizosaccharomyces pombe (strain 972 / ATCC 24843) (Fission yeast).